Here is a 508-residue protein sequence, read N- to C-terminus: Adenylosuccinate synthetase 1, chloroplastic (508 aa).

A chloroplast-targeting transit peptide spans 1-56 (MNISILRLDSNPITTATSPATATANHRSGILGCYNGTYSCRLNQLQQRKKNPSIIV). Residues 95–101 (GDEGKGK) and 123–125 (GHT) each bind GTP. The active-site Proton acceptor is D96. Residues D96 and G123 each contribute to the Mg(2+) site. IMP-binding positions include 96 to 99 (DEGK), 121 to 124 (NAGH), T213, R227, Q307, T322, and R386. H124 serves as the catalytic Proton donor. 382-388 (TTTGRPR) is a binding site for substrate. Residues R388, 414-416 (KLD), and 497-499 (GIG) contribute to the GTP site.

Belongs to the adenylosuccinate synthetase family. As to quaternary structure, homodimer. It depends on Mg(2+) as a cofactor.

Its subcellular location is the plastid. The protein resides in the chloroplast. It catalyses the reaction IMP + L-aspartate + GTP = N(6)-(1,2-dicarboxyethyl)-AMP + GDP + phosphate + 2 H(+). It functions in the pathway purine metabolism; AMP biosynthesis via de novo pathway; AMP from IMP: step 1/2. In terms of biological role, plays an important role in the de novo pathway and in the salvage pathway of purine nucleotide biosynthesis. Catalyzes the first committed step in the biosynthesis of AMP from IMP. The polypeptide is Adenylosuccinate synthetase 1, chloroplastic (Capsicum frutescens (Cayenne pepper)).